The chain runs to 352 residues: Mitochondrial ubiquitin ligase activator of NFKB 1 (352 aa).

The Cytoplasmic portion of the chain corresponds to 1–8 (MESGSRPS). Residues 9-29 (LGQVILLGTSSMVTAVLYSIY) form a helical membrane-spanning segment. At 30–238 (RQKAQVAQEL…LLHRQESSVR (209 aa)) the chain is on the mitochondrial intermembrane side. Lys-52 is covalently cross-linked (Glycyl lysine isopeptide (Lys-Gly) (interchain with G-Cter in ubiquitin)). Residues 239 to 259 (LWKILVLVFGFATCATLFFIL) form a helical membrane-spanning segment. Residues 260–352 (RKQYLHRQER…ITRVIPLYNS (93 aa)) are Cytoplasmic-facing. A Glycyl lysine isopeptide (Lys-Gly) (interchain with G-Cter in ubiquitin) cross-link involves residue Lys-299. Residues 302 to 340 (CVVCLSNFKSCVFLECGHVCSCRQCYLALPEPKRCPICR) form an RING-type zinc finger.

Homooligomer. Interacts with MAP3K7/TAK1. Interacts with UBC9. Interacts with and sumoylates DNM1L. Interacts with MAVS. Interacts with TP53 (via N-terminus); the interaction leads to ubiquitination and proteasomal degradation of TP53. Ubiquitinated by PRKN during mitophagy, leading to its degradation and enhancement of mitophagy. Deubiquitinated by USP30. Expressed in cortical neurons (at protein level).

It localises to the mitochondrion outer membrane. The protein resides in the peroxisome. It catalyses the reaction S-ubiquitinyl-[E2 ubiquitin-conjugating enzyme]-L-cysteine + [acceptor protein]-L-lysine = [E2 ubiquitin-conjugating enzyme]-L-cysteine + N(6)-ubiquitinyl-[acceptor protein]-L-lysine.. Its pathway is protein modification; protein ubiquitination. The protein operates within protein modification; protein sumoylation. Exhibits weak E3 ubiquitin-protein ligase activity. E3 ubiquitin ligases accept ubiquitin from an E2 ubiquitin-conjugating enzyme in the form of a thioester and then directly transfer the ubiquitin to targeted substrates. Can ubiquitinate AKT1 preferentially at 'Lys-284' involving 'Lys-48'-linked polyubiquitination and seems to be involved in regulation of Akt signaling by targeting phosphorylated Akt to proteasomal degradation. Mediates polyubiquitination of cytoplasmic TP53 at 'Lys-27' which targets TP53 for proteasomal degradation, thus reducing TP53 levels in the cytoplasm and mitochondrion. Proposed to preferentially act as a SUMO E3 ligase at physiological concentrations. Plays a role in the control of mitochondrial morphology by promoting mitochondrial fragmentation, and influences mitochondrial localization. Likely to promote mitochondrial fission through negatively regulating the mitochondrial fusion proteins MFN1 and MFN2, acting in a pathway that is parallel to the PRKN/PINK1 regulatory pathway. May also be involved in the sumoylation of the membrane fission protein DNM1L. Inhibits cell growth. When overexpressed, activates JNK through MAP3K7/TAK1 and induces caspase-dependent apoptosis. Involved in the modulation of innate immune defense against viruses by inhibiting RIGI-dependent antiviral response. Can mediate RIGI sumoylation and disrupt its polyubiquitination. The chain is Mitochondrial ubiquitin ligase activator of NFKB 1 (Mul1) from Mus musculus (Mouse).